We begin with the raw amino-acid sequence, 411 residues long: CinA-like protein (411 aa).

Belongs to the CinA family.

This Dictyoglomus thermophilum (strain ATCC 35947 / DSM 3960 / H-6-12) protein is CinA-like protein.